The sequence spans 32 residues: Cytochrome b6-f complex subunit 7 (32 aa).

Residues 9-27 form a helical membrane-spanning segment; it reads AALFWVLIPLGLAGGALLL.

The protein belongs to the PetM family. The 4 large subunits of the cytochrome b6-f complex are cytochrome b6, subunit IV (17 kDa polypeptide, PetD), cytochrome f and the Rieske protein, while the 4 small subunits are PetG, PetL, PetM and PetN. The complex functions as a dimer.

The protein resides in the cellular thylakoid membrane. Component of the cytochrome b6-f complex, which mediates electron transfer between photosystem II (PSII) and photosystem I (PSI), cyclic electron flow around PSI, and state transitions. The protein is Cytochrome b6-f complex subunit 7 of Synechococcus sp. (strain RCC307).